The primary structure comprises 556 residues: Arginine--tRNA ligase (556 aa).

Positions 132 to 142 match the 'HIGH' region motif; that stretch reads ANPTGDLHLGH.

It belongs to the class-I aminoacyl-tRNA synthetase family. Monomer.

The protein resides in the cytoplasm. The catalysed reaction is tRNA(Arg) + L-arginine + ATP = L-arginyl-tRNA(Arg) + AMP + diphosphate. This chain is Arginine--tRNA ligase, found in Listeria monocytogenes serotype 4a (strain HCC23).